Consider the following 64-residue polypeptide: Putative antitoxin VapB4 (64 aa).

Belongs to the UPF0165 family.

In terms of biological role, possibly the antitoxin component of a type II toxin-antitoxin (TA) system. Its cognate toxin is VapC4 (Potential). The polypeptide is Putative antitoxin VapB4 (vapB4) (Archaeoglobus fulgidus (strain ATCC 49558 / DSM 4304 / JCM 9628 / NBRC 100126 / VC-16)).